A 500-amino-acid chain; its full sequence is uncharacterized protein (500 aa).

The chain crosses the membrane as a helical span at residues 27–47 (IFALILIVFGFIIAPLLPGIF).

Its subcellular location is the membrane. This is an uncharacterized protein from Borreliella burgdorferi (strain ATCC 35210 / DSM 4680 / CIP 102532 / B31) (Borrelia burgdorferi).